The chain runs to 251 residues: 1-(5-phosphoribosyl)-5-[(5-phosphoribosylamino)methylideneamino] imidazole-4-carboxamide isomerase (251 aa).

Aspartate 8 (proton acceptor) is an active-site residue. Aspartate 131 (proton donor) is an active-site residue.

Belongs to the HisA/HisF family.

Its subcellular location is the cytoplasm. The enzyme catalyses 1-(5-phospho-beta-D-ribosyl)-5-[(5-phospho-beta-D-ribosylamino)methylideneamino]imidazole-4-carboxamide = 5-[(5-phospho-1-deoxy-D-ribulos-1-ylimino)methylamino]-1-(5-phospho-beta-D-ribosyl)imidazole-4-carboxamide. The protein operates within amino-acid biosynthesis; L-histidine biosynthesis; L-histidine from 5-phospho-alpha-D-ribose 1-diphosphate: step 4/9. The polypeptide is 1-(5-phosphoribosyl)-5-[(5-phosphoribosylamino)methylideneamino] imidazole-4-carboxamide isomerase (Burkholderia pseudomallei (strain 1710b)).